Here is a 146-residue protein sequence, read N- to C-terminus: MRVVLQRSKEASVTVDGEIVGQIPFGLTLLVGITHEDTEKDATYIAEKIANLRIFEDESGKMNHSVLDMKGQVLSISQFTLYGDCRKGRRPNFMDAAKPDYAEHLYDFFNEEVRKQGLHVETGQFGAMMDVSLINDGPVTLIVESK.

The Gly-cisPro motif, important for rejection of L-amino acids signature appears at 137–138; the sequence is GP.

This sequence belongs to the DTD family. As to quaternary structure, homodimer.

The protein localises to the cytoplasm. The catalysed reaction is glycyl-tRNA(Ala) + H2O = tRNA(Ala) + glycine + H(+). It carries out the reaction a D-aminoacyl-tRNA + H2O = a tRNA + a D-alpha-amino acid + H(+). Functionally, an aminoacyl-tRNA editing enzyme that deacylates mischarged D-aminoacyl-tRNAs. Also deacylates mischarged glycyl-tRNA(Ala), protecting cells against glycine mischarging by AlaRS. Acts via tRNA-based rather than protein-based catalysis; rejects L-amino acids rather than detecting D-amino acids in the active site. By recycling D-aminoacyl-tRNA to D-amino acids and free tRNA molecules, this enzyme counteracts the toxicity associated with the formation of D-aminoacyl-tRNA entities in vivo and helps enforce protein L-homochirality. This is D-aminoacyl-tRNA deacylase from Bacillus mycoides (strain KBAB4) (Bacillus weihenstephanensis).